A 101-amino-acid polypeptide reads, in one-letter code: Small ribosomal subunit protein uS14 (101 aa).

It belongs to the universal ribosomal protein uS14 family. Part of the 30S ribosomal subunit. Contacts proteins S3 and S10.

Binds 16S rRNA, required for the assembly of 30S particles and may also be responsible for determining the conformation of the 16S rRNA at the A site. The protein is Small ribosomal subunit protein uS14 of Cellvibrio japonicus (strain Ueda107) (Pseudomonas fluorescens subsp. cellulosa).